The chain runs to 412 residues: DnaJ homolog subfamily A member 2 (412 aa).

The 63-residue stretch at 8 to 70 folds into the J domain; that stretch reads KLYDILGVPP…EKRELYDRYG (63 aa). At Lys39 the chain carries N6-acetyllysine. Phosphoserine is present on residues Ser78 and Ser123. The CR-type zinc-finger motif lies at 130 to 214; that stretch reads GKTTKLQLSK…CEGKKVIKEV (85 aa). Lys134 is covalently cross-linked (Glycyl lysine isopeptide (Lys-Gly) (interchain with G-Cter in SUMO2)). Zn(2+) is bound by residues Cys143 and Cys146. One copy of the CXXCXGXG motif repeat lies at 143 to 150; that stretch reads CSACSGQG. The residue at position 152 (Lys152) is an N6-acetyllysine. Residues Cys159, Cys162, Cys186, Cys189, Cys202, and Cys205 each contribute to the Zn(2+) site. CXXCXGXG motif repeat units follow at residues 159 to 166, 186 to 193, and 202 to 209; these read CSACRGRG, CSDCNGEG, and CKKCEGKK. Residues 359–412 are disordered; the sequence is PEVPNIIGDTEEVELQEFDSTRGSGGGQRREAYNDSSDEESSSHHGPGVQCAHQ. Tyr391 is subject to Phosphotyrosine. 2 positions are modified to phosphoserine: Ser394 and Ser395. Position 409 is a cysteine methyl ester (Cys409). A lipid anchor (S-farnesyl cysteine) is attached at Cys409. Residues 410–412 constitute a propeptide, removed in mature form; it reads AHQ.

The protein resides in the membrane. Functionally, co-chaperone of Hsc70. Stimulates ATP hydrolysis and the folding of unfolded proteins mediated by HSPA1A/B (in vitro). The protein is DnaJ homolog subfamily A member 2 (DNAJA2) of Bos taurus (Bovine).